The sequence spans 93 residues: MPKPDIHPNWYPDAKVICNGEVVMTTGSTQPELHVDVWSGNHPFFTGTQKILDTEGRVDRFMRKYGMGSADAAADEKKTDAKNNNKDNTSKED.

The interval 68–93 (GSADAAADEKKTDAKNNNKDNTSKED) is disordered. Positions 74 to 93 (ADEKKTDAKNNNKDNTSKED) are enriched in basic and acidic residues.

This sequence belongs to the bacterial ribosomal protein bL31 family. Type A subfamily. In terms of assembly, part of the 50S ribosomal subunit.

Functionally, binds the 23S rRNA. The polypeptide is Large ribosomal subunit protein bL31 (Prochlorococcus marinus (strain MIT 9303)).